Reading from the N-terminus, the 788-residue chain is Ribosome biogenesis protein ERB1 (788 aa).

Residues Met1–Pro91 are disordered. Residues Leu38–Asp50 show a composition bias toward basic and acidic residues. Positions Ser51–Ser78 are enriched in acidic residues. Over residues Ile80–Pro91 the composition is skewed to basic and acidic residues. WD repeat units follow at residues Gly433–Ser472, Ser476–Glu516, Lys613–Ile651, Pro654–Lys699, Tyr703–Ser742, and Thr758–Thr788.

Belongs to the WD repeat BOP1/ERB1 family. In terms of assembly, component of the NOP7 complex, composed of ERB1, NOP7 and YTM1. The complex is held together by ERB1, which interacts with NOP7 via its N-terminal domain and with YTM1 via a high-affinity interaction between the seven-bladed beta-propeller domains of the 2 proteins. The NOP7 complex associates with the 66S pre-ribosome.

Its subcellular location is the nucleus. The protein localises to the nucleolus. It localises to the nucleoplasm. Its function is as follows. Component of the NOP7 complex, which is required for maturation of the 25S and 5.8S ribosomal RNAs and formation of the 60S ribosome. This chain is Ribosome biogenesis protein ERB1, found in Ajellomyces capsulatus (strain NAm1 / WU24) (Darling's disease fungus).